A 66-amino-acid chain; its full sequence is Large ribosomal subunit protein bL33c (66 aa).

The protein belongs to the bacterial ribosomal protein bL33 family.

The protein resides in the plastid. It is found in the chloroplast. In Cucumis sativus (Cucumber), this protein is Large ribosomal subunit protein bL33c.